Here is a 231-residue protein sequence, read N- to C-terminus: 5'-methylthioadenosine/S-adenosylhomocysteine nucleosidase (231 aa).

The Proton acceptor role is filled by E12. Residues G78, I153, and 174–175 (ME) contribute to the substrate site. Catalysis depends on D198, which acts as the Proton donor.

Belongs to the PNP/UDP phosphorylase family. MtnN subfamily.

The catalysed reaction is S-adenosyl-L-homocysteine + H2O = S-(5-deoxy-D-ribos-5-yl)-L-homocysteine + adenine. It carries out the reaction S-methyl-5'-thioadenosine + H2O = 5-(methylsulfanyl)-D-ribose + adenine. The enzyme catalyses 5'-deoxyadenosine + H2O = 5-deoxy-D-ribose + adenine. The protein operates within amino-acid biosynthesis; L-methionine biosynthesis via salvage pathway; S-methyl-5-thio-alpha-D-ribose 1-phosphate from S-methyl-5'-thioadenosine (hydrolase route): step 1/2. Functionally, catalyzes the irreversible cleavage of the glycosidic bond in both 5'-methylthioadenosine (MTA) and S-adenosylhomocysteine (SAH/AdoHcy) to adenine and the corresponding thioribose, 5'-methylthioribose and S-ribosylhomocysteine, respectively. Also cleaves 5'-deoxyadenosine, a toxic by-product of radical S-adenosylmethionine (SAM) enzymes, into 5-deoxyribose and adenine. In Shewanella sp. (strain W3-18-1), this protein is 5'-methylthioadenosine/S-adenosylhomocysteine nucleosidase.